Here is a 1186-residue protein sequence, read N- to C-terminus: ATP-dependent helicase/deoxyribonuclease subunit B (1186 aa).

The region spanning 1–308 is the UvrD-like helicase ATP-binding domain; the sequence is MSVKFLLGRA…AHLEKEWGKN (308 aa). 8-15 provides a ligand contact to ATP; it reads GRAGSGKT. Positions 288 to 620 constitute a UvrD-like helicase C-terminal domain; it reads SLPRFKDNPA…LVGTADRSRY (333 aa). [4Fe-4S] cluster contacts are provided by Cys-822, Cys-1144, Cys-1147, and Cys-1153.

Belongs to the helicase family. AddB/RexB type 1 subfamily. As to quaternary structure, heterodimer of AddA and AddB. The cofactor is Mg(2+). [4Fe-4S] cluster serves as cofactor.

The heterodimer acts as both an ATP-dependent DNA helicase and an ATP-dependent, dual-direction single-stranded exonuclease. Recognizes the chi site generating a DNA molecule suitable for the initiation of homologous recombination. The AddB subunit has 5' -&gt; 3' nuclease activity but not helicase activity. The protein is ATP-dependent helicase/deoxyribonuclease subunit B of Natranaerobius thermophilus (strain ATCC BAA-1301 / DSM 18059 / JW/NM-WN-LF).